The sequence spans 88 residues: Small ribosomal subunit protein uS15c (88 aa).

The protein belongs to the universal ribosomal protein uS15 family. Part of the 30S ribosomal subunit.

The protein resides in the plastid. Its subcellular location is the chloroplast. The chain is Small ribosomal subunit protein uS15c (rps15) from Barbarea verna (Land cress).